The chain runs to 96 residues: Protein Vpr (96 aa).

Residues 1-42 are homooligomerization; that stretch reads MEQAPEDQGPQREPHNEWTLELLEEIKNEAVRHFPRVWLHQL. Phosphoserine; by host is present on residues Ser79, Ser94, and Ser96.

The protein belongs to the HIV-1 VPR protein family. As to quaternary structure, homooligomer, may form homodimer. Interacts with p6-gag region of the Pr55 Gag precursor protein through a (Leu-X-X)4 motif near the C-terminus of the P6gag protein. Interacts with host UNG. May interact with host RAD23A/HHR23A. Interacts with host VPRBP/DCAF1, leading to hijack the CUL4A-RBX1-DDB1-DCAF1/VPRBP complex, mediating ubiquitination of host proteins such as TERT and ZGPAT and arrest of the cell cycle in G2 phase. Post-translationally, phosphorylated on several residues by host. These phosphorylations regulate VPR activity for the nuclear import of the HIV-1 pre-integration complex.

It localises to the virion. It is found in the host nucleus. The protein localises to the host extracellular space. Its function is as follows. During virus replication, may deplete host UNG protein, and incude G2-M cell cycle arrest. Acts by targeting specific host proteins for degradation by the 26S proteasome, through association with the cellular CUL4A-DDB1 E3 ligase complex by direct interaction with host VPRPB/DCAF-1. Cell cycle arrest reportedly occurs within hours of infection and is not blocked by antiviral agents, suggesting that it is initiated by the VPR carried into the virion. Additionally, VPR induces apoptosis in a cell cycle dependent manner suggesting that these two effects are mechanistically linked. Detected in the serum and cerebrospinal fluid of AIDS patient, VPR may also induce cell death to bystander cells. Functionally, during virus entry, plays a role in the transport of the viral pre-integration (PIC) complex to the host nucleus. This function is crucial for viral infection of non-dividing macrophages. May act directly at the nuclear pore complex, by binding nucleoporins phenylalanine-glycine (FG)-repeat regions. The protein is Protein Vpr of Homo sapiens (Human).